The chain runs to 100 residues: Large ribosomal subunit protein uL23 (100 aa).

It belongs to the universal ribosomal protein uL23 family. Part of the 50S ribosomal subunit. Contacts protein L29, and trigger factor when it is bound to the ribosome.

Its function is as follows. One of the early assembly proteins it binds 23S rRNA. One of the proteins that surrounds the polypeptide exit tunnel on the outside of the ribosome. Forms the main docking site for trigger factor binding to the ribosome. This is Large ribosomal subunit protein uL23 from Dechloromonas aromatica (strain RCB).